The sequence spans 373 residues: Carbamoyl phosphate synthase small chain (373 aa).

Residues 1–179 (MSGKAQLVLE…AYIVEPEGPP (179 aa)) are CPSase. The L-glutamine site is built by serine 47, glycine 230, and glycine 232. Residues 182 to 373 (TVAALDLGIK…QFIELMEGDR (192 aa)) enclose the Glutamine amidotransferase type-1 domain. The active-site Nucleophile is cysteine 258. L-glutamine is bound by residues phenylalanine 259, glutamine 262, asparagine 300, glycine 302, and phenylalanine 303. Residues histidine 348 and glutamate 350 contribute to the active site.

The protein belongs to the CarA family. In terms of assembly, composed of two chains; the small (or glutamine) chain promotes the hydrolysis of glutamine to ammonia, which is used by the large (or ammonia) chain to synthesize carbamoyl phosphate. Tetramer of heterodimers (alpha,beta)4.

It catalyses the reaction hydrogencarbonate + L-glutamine + 2 ATP + H2O = carbamoyl phosphate + L-glutamate + 2 ADP + phosphate + 2 H(+). It carries out the reaction L-glutamine + H2O = L-glutamate + NH4(+). The protein operates within amino-acid biosynthesis; L-arginine biosynthesis; carbamoyl phosphate from bicarbonate: step 1/1. It functions in the pathway pyrimidine metabolism; UMP biosynthesis via de novo pathway; (S)-dihydroorotate from bicarbonate: step 1/3. Its function is as follows. Small subunit of the glutamine-dependent carbamoyl phosphate synthetase (CPSase). CPSase catalyzes the formation of carbamoyl phosphate from the ammonia moiety of glutamine, carbonate, and phosphate donated by ATP, constituting the first step of 2 biosynthetic pathways, one leading to arginine and/or urea and the other to pyrimidine nucleotides. The small subunit (glutamine amidotransferase) binds and cleaves glutamine to supply the large subunit with the substrate ammonia. This Mycolicibacterium paratuberculosis (strain ATCC BAA-968 / K-10) (Mycobacterium paratuberculosis) protein is Carbamoyl phosphate synthase small chain.